We begin with the raw amino-acid sequence, 306 residues long: Non-specific ribonucleoside hydrolase RihC (306 aa).

His235 is a catalytic residue.

Belongs to the IUNH family. RihC subfamily.

Functionally, hydrolyzes both purine and pyrimidine ribonucleosides with a broad-substrate specificity. The chain is Non-specific ribonucleoside hydrolase RihC from Salmonella schwarzengrund (strain CVM19633).